The primary structure comprises 102 residues: Large ribosomal subunit protein eL21 (102 aa).

The segment covering 1–21 (MVRRSKGFRSRTRKKLRKKPR) has biased composition (basic residues). Residues 1-33 (MVRRSKGFRSRTRKKLRKKPRERGLSPLGPMTQ) form a disordered region.

The protein belongs to the eukaryotic ribosomal protein eL21 family.

The polypeptide is Large ribosomal subunit protein eL21 (Methanopyrus kandleri (strain AV19 / DSM 6324 / JCM 9639 / NBRC 100938)).